The following is a 275-amino-acid chain: Large ribosomal subunit protein uL2 (275 aa).

The segment at 208 to 275 is disordered; the sequence is AGAKRWRGRR…NMIIRDRRKK (68 aa). Basic residues-rich tracts occupy residues 209–219 and 254–263; these read GAKRWRGRRPT and KGYKTRRNKR.

The protein belongs to the universal ribosomal protein uL2 family. Part of the 50S ribosomal subunit. Forms a bridge to the 30S subunit in the 70S ribosome.

Functionally, one of the primary rRNA binding proteins. Required for association of the 30S and 50S subunits to form the 70S ribosome, for tRNA binding and peptide bond formation. It has been suggested to have peptidyltransferase activity; this is somewhat controversial. Makes several contacts with the 16S rRNA in the 70S ribosome. The polypeptide is Large ribosomal subunit protein uL2 (Coxiella burnetii (strain CbuG_Q212) (Coxiella burnetii (strain Q212))).